The primary structure comprises 552 residues: Transcription factor kayak (552 aa).

Disordered stretches follow at residues Leu-110–Thr-145 and Gly-177–Val-234. Residues Ala-111–Gln-127 show a composition bias toward polar residues. Residues Thr-135–Thr-145 show a composition bias toward low complexity. A compositionally biased stretch (polar residues) spans Gly-177 to Pro-192. In terms of domain architecture, bZIP spans Glu-212–His-275. A basic motif region spans residues Lys-214–Arg-233. Positions Leu-240–Leu-247 are leucine-zipper. Residues Ala-304 to Gly-325 show a composition bias toward low complexity. Disordered stretches follow at residues Ala-304–Leu-346, Leu-365–Pro-390, and Gly-514–Leu-552. Over residues Thr-333 to Pro-343 the composition is skewed to polar residues. At Ser-342 the chain carries Phosphoserine.

Belongs to the bZIP family. Fos subfamily. In terms of assembly, homodimer. Heterodimer with Jra. The kay-Jra heterodimer binds more stably to the AP-1 site than either of the two proteins alone.

It is found in the nucleus. Functionally, developmentally regulated transcription factor AP-1 binds and recognizes the enhancer DNA sequence: 5'-TGA[CG]TCA-3'. May play a role in the function or determination of a particular subset of cells in the developing embryo. It is able to carry out its function either independently of or in conjunction with Jra. The sequence is that of Transcription factor kayak from Drosophila yakuba (Fruit fly).